The following is a 332-amino-acid chain: MRVVLFSSQSYDRGPFEEANKTFNHEIIYHNFSLNKDTVSLAGKAQVVCVFVNDQVDADTLKALAENGVKLVALRCGGYNNVNLKAASEYKITVVHVPSYSPFAVSEFTVGLLLSLNRKIHRAYVRVREDDFNIVGLLGCDIHGKTVGVIGTGKIGSNVAKCFKMGFGCDVLAYDINPDKKLENYGVQFVEQNEVLKKADFLCLHCPLTPSTTHIVNSDSLALMKKGVTIVNTSRGGLIDTKALVDAIDSGQVGGCAIDVYEGERNLFYKDLSNEVIKDSTFQRLVNFPNVLVTSHQAFFTTEALCSIAHTTLKSASDFYTNSLDESVIANK.

NAD(+) is bound by residues lysine 154–isoleucine 155, threonine 233–arginine 235, and aspartate 259. Residue arginine 235 is part of the active site. Glutamate 264 is an active-site residue. Histidine 296 acts as the Proton donor in catalysis. Histidine 296 to phenylalanine 299 is a binding site for NAD(+).

This sequence belongs to the D-isomer specific 2-hydroxyacid dehydrogenase family.

It is found in the cytoplasm. The protein resides in the nucleus. The chain is 2-hydroxyacid dehydrogenase homolog 2 from Schizosaccharomyces pombe (strain 972 / ATCC 24843) (Fission yeast).